A 338-amino-acid chain; its full sequence is MSFEQKPKVTVILANLGTPDEATVPAVRRFLKQFLSDPRVIEIPKFIWWIILNLFVLPFRPKRVAHAYASVWSTDSPMREIVFEQTQRVQAYLERENKQFDLTVLPAMTYGNPGIDAVLEKLATNPQEHVILLPLFPQYSATSTAPLYDAFAKWIPTQRNLPGLTIIKDYYQHPMFIQALAESVLAYQEQHGKPEKLLMSFHGIPQPYADKGDPYADRCRITAKLVAEALHLKDDEWAISFQSRFGKQEWVKPYTDQLLQDWAKQGVKSVQVLSPAFSADCLETLEELAIQNAELFQQAGGGSYAYIPALNSDQAHIDLLAGLVQANLDALTHTLAHR.

Residues His-202 and Glu-283 each contribute to the Fe cation site.

This sequence belongs to the ferrochelatase family.

The protein resides in the cytoplasm. It catalyses the reaction heme b + 2 H(+) = protoporphyrin IX + Fe(2+). Its pathway is porphyrin-containing compound metabolism; protoheme biosynthesis; protoheme from protoporphyrin-IX: step 1/1. In terms of biological role, catalyzes the ferrous insertion into protoporphyrin IX. This is Ferrochelatase from Acinetobacter baumannii (strain AB307-0294).